The sequence spans 438 residues: Tol-Pal system protein TolB (438 aa).

Residues 1–35 form the signal peptide; sequence MITMKNILKLRATGLLLLLLLMISVLGNGIGQAMA.

It belongs to the TolB family. As to quaternary structure, the Tol-Pal system is composed of five core proteins: the inner membrane proteins TolA, TolQ and TolR, the periplasmic protein TolB and the outer membrane protein Pal. They form a network linking the inner and outer membranes and the peptidoglycan layer.

The protein localises to the periplasm. Part of the Tol-Pal system, which plays a role in outer membrane invagination during cell division and is important for maintaining outer membrane integrity. The protein is Tol-Pal system protein TolB of Desulfotalea psychrophila (strain LSv54 / DSM 12343).